Here is a 468-residue protein sequence, read N- to C-terminus: BTB/POZ domain-containing protein 17 (468 aa).

The N-terminal stretch at 1–16 (MRRFCVVPLLLVLVEA) is a signal peptide. Residues 51-120 (TDTILRIRTA…FYCGEISVNL (70 aa)) form the BTB domain. One can recognise a BACK domain in the interval 159–259 (VVSWYHYALR…ISPSQLFQIQ (101 aa)).

It is found in the secreted. The protein is BTB/POZ domain-containing protein 17 (btbd17) of Xenopus tropicalis (Western clawed frog).